Reading from the N-terminus, the 330-residue chain is Aspartate--ammonia ligase (330 aa).

This sequence belongs to the class-II aminoacyl-tRNA synthetase family. AsnA subfamily.

The protein resides in the cytoplasm. It carries out the reaction L-aspartate + NH4(+) + ATP = L-asparagine + AMP + diphosphate + H(+). Its pathway is amino-acid biosynthesis; L-asparagine biosynthesis; L-asparagine from L-aspartate (ammonia route): step 1/1. The polypeptide is Aspartate--ammonia ligase (Actinobacillus succinogenes (strain ATCC 55618 / DSM 22257 / CCUG 43843 / 130Z)).